Reading from the N-terminus, the 247-residue chain is Proteasome subunit alpha (247 aa).

This sequence belongs to the peptidase T1A family. The 20S proteasome core is composed of 14 alpha and 14 beta subunits that assemble into four stacked heptameric rings, resulting in a barrel-shaped structure. The two inner rings, each composed of seven catalytic beta subunits, are sandwiched by two outer rings, each composed of seven alpha subunits. The catalytic chamber with the active sites is on the inside of the barrel. Has a gated structure, the ends of the cylinder being occluded by the N-termini of the alpha-subunits. Is capped at one or both ends by the proteasome regulatory ATPase, PAN.

The protein localises to the cytoplasm. With respect to regulation, the formation of the proteasomal ATPase PAN-20S proteasome complex, via the docking of the C-termini of PAN into the intersubunit pockets in the alpha-rings, triggers opening of the gate for substrate entry. Interconversion between the open-gate and close-gate conformations leads to a dynamic regulation of the 20S proteasome proteolysis activity. Functionally, component of the proteasome core, a large protease complex with broad specificity involved in protein degradation. This Methanosarcina thermophila protein is Proteasome subunit alpha.